Here is a 341-residue protein sequence, read N- to C-terminus: Phenylalanine--tRNA ligase alpha subunit (341 aa).

Residue glutamate 254 participates in Mg(2+) binding.

Belongs to the class-II aminoacyl-tRNA synthetase family. Phe-tRNA synthetase alpha subunit type 1 subfamily. As to quaternary structure, tetramer of two alpha and two beta subunits. Requires Mg(2+) as cofactor.

Its subcellular location is the cytoplasm. It carries out the reaction tRNA(Phe) + L-phenylalanine + ATP = L-phenylalanyl-tRNA(Phe) + AMP + diphosphate + H(+). The chain is Phenylalanine--tRNA ligase alpha subunit (pheS) from Mycoplasma genitalium (strain ATCC 33530 / DSM 19775 / NCTC 10195 / G37) (Mycoplasmoides genitalium).